The chain runs to 494 residues: UDP-N-acetylmuramate--L-alanine ligase (494 aa).

140–146 (GTHGKTT) is an ATP binding site.

Belongs to the MurCDEF family.

It is found in the cytoplasm. The catalysed reaction is UDP-N-acetyl-alpha-D-muramate + L-alanine + ATP = UDP-N-acetyl-alpha-D-muramoyl-L-alanine + ADP + phosphate + H(+). Its pathway is cell wall biogenesis; peptidoglycan biosynthesis. Its function is as follows. Cell wall formation. The chain is UDP-N-acetylmuramate--L-alanine ligase from Trichormus variabilis (strain ATCC 29413 / PCC 7937) (Anabaena variabilis).